The following is a 208-amino-acid chain: Uracil phosphoribosyltransferase (208 aa).

Residues Arg78, Arg103, and 130-138 each bind 5-phospho-alpha-D-ribose 1-diphosphate; that span reads DPMLATGGT. Residues Ile193 and 198–200 contribute to the uracil site; that span reads GDA. Asp199 provides a ligand contact to 5-phospho-alpha-D-ribose 1-diphosphate.

It belongs to the UPRTase family. Mg(2+) is required as a cofactor.

The enzyme catalyses UMP + diphosphate = 5-phospho-alpha-D-ribose 1-diphosphate + uracil. The protein operates within pyrimidine metabolism; UMP biosynthesis via salvage pathway; UMP from uracil: step 1/1. With respect to regulation, allosterically activated by GTP. Functionally, catalyzes the conversion of uracil and 5-phospho-alpha-D-ribose 1-diphosphate (PRPP) to UMP and diphosphate. This chain is Uracil phosphoribosyltransferase, found in Desulfotalea psychrophila (strain LSv54 / DSM 12343).